Here is a 327-residue protein sequence, read N- to C-terminus: AA9 family lytic polysaccharide monooxygenase B (327 aa).

Positions 1 to 19 (MKSFTATALAALLAQQAAA) are cleaved as a signal peptide. The Cu(2+) site is built by histidine 20 and histidine 98. The cysteines at positions 68 and 192 are disulfide-linked. The O2 site is built by histidine 178 and glutamine 187. Tyrosine 189 contributes to the Cu(2+) binding site. Over residues 264–280 (SPTTSLTPPVSTSTPAP) the composition is skewed to low complexity. Residues 264-284 (SPTTSLTPPVSTSTPAPGNGG) are disordered. A CBM1 domain is found at 291–327 (CTVQKYGQCGGQGYTGCTTCAAGSTCNTTNQWYHQCV). A glycan (N-linked (GlcNAc...) asparagine) is linked at asparagine 317.

Belongs to the polysaccharide monooxygenase AA9 family. The cofactor is Cu(2+).

Its subcellular location is the secreted. It carries out the reaction [(1-&gt;4)-beta-D-glucosyl]n+m + reduced acceptor + O2 = 4-dehydro-beta-D-glucosyl-[(1-&gt;4)-beta-D-glucosyl]n-1 + [(1-&gt;4)-beta-D-glucosyl]m + acceptor + H2O.. Lytic polysaccharide monooxygenase (LPMO) that depolymerizes crystalline and amorphous polysaccharides via the oxidation of scissile alpha- or beta-(1-4)-glycosidic bonds, yielding C1 or C4 oxidation products. Catalysis by LPMOs requires the reduction of the active-site copper from Cu(II) to Cu(I) by a reducing agent and H(2)O(2) or O(2) as a cosubstrate. The chain is AA9 family lytic polysaccharide monooxygenase B (LPMO9B) from Podospora anserina (strain S / ATCC MYA-4624 / DSM 980 / FGSC 10383) (Pleurage anserina).